Consider the following 117-residue polypeptide: Protein Wnt-6 (117 aa).

The O-palmitoleoyl serine; by PORCN moiety is linked to residue Ser-1. The cysteines at positions 83 and 98 are disulfide-linked. The N-linked (GlcNAc...) asparagine glycan is linked to Asn-84.

This sequence belongs to the Wnt family. Palmitoleoylation is required for efficient binding to frizzled receptors. Depalmitoleoylation leads to Wnt signaling pathway inhibition.

Its subcellular location is the secreted. The protein localises to the extracellular space. It is found in the extracellular matrix. In terms of biological role, ligand for members of the frizzled family of seven transmembrane receptors. Probable developmental protein. May be a signaling molecule which affects the development of discrete regions of tissues. Is likely to signal over only few cell diameters. This chain is Protein Wnt-6 (wnt6), found in Thunnus thynnus (Atlantic bluefin tuna).